The primary structure comprises 347 residues: Tetraacyldisaccharide 4'-kinase (347 aa).

54-61 (TVGGAGKT) lines the ATP pocket.

It belongs to the LpxK family.

It catalyses the reaction a lipid A disaccharide + ATP = a lipid IVA + ADP + H(+). The protein operates within glycolipid biosynthesis; lipid IV(A) biosynthesis; lipid IV(A) from (3R)-3-hydroxytetradecanoyl-[acyl-carrier-protein] and UDP-N-acetyl-alpha-D-glucosamine: step 6/6. Functionally, transfers the gamma-phosphate of ATP to the 4'-position of a tetraacyldisaccharide 1-phosphate intermediate (termed DS-1-P) to form tetraacyldisaccharide 1,4'-bis-phosphate (lipid IVA). This chain is Tetraacyldisaccharide 4'-kinase, found in Rhizobium etli (strain CIAT 652).